A 396-amino-acid chain; its full sequence is Diels-Alderase mpsD (396 aa).

The protein belongs to the Diels-Alderase family.

Its pathway is secondary metabolite biosynthesis. Diels-Alderase; part of the gene cluster that mediates the biosynthesis of macrophasetins, 3-decalinoyltetramic acids (DTAs) which feature a tetramate (pyrrolidine-2,4-dione) unit connected to a decalin fragment and that have potent bioactivities. The PKS-NRPS mpsA together with its associated enoylreductase partner mpsG incorporate one unit of acetyl-CoA, seven units of malonyl-CoA, and one unit of L-alanine to assemble the linear tetramic acid intermediate corresponding to the backbone of macrophasetins. Without the Diels-Alderase mpsD, the mpsA/G product can undergo the non-enzymatic intramolecular Diels-Alder (IMDA) reaction to generate both macrophasetin A and macrophasetin B. Catalyzed by mpsD, the linear tetramic acid intermediate is thoroughly converted to macrophasetin A via the endo-IMDA reaction in a regioselective and stereoselective manner. Finally, the cytochrome P450 monooxygenase mpsF catalyzes the hydroxylation at C20 to yield the end product macrophasetin C. This Macrophomina phaseolina (strain MS6) (Charcoal rot fungus) protein is Diels-Alderase mpsD.